Reading from the N-terminus, the 552-residue chain is MDIKRTVLWVIFFMSAVMLYDNWQRDHGRPSMFFPSATHTAPAAAGGASGTGATTAGDVPAAAAGAAPSTTAPAAQAQLVKFSTDVYDGEIDTRGGTLAKLTLKKQGDGKQPDLYITLFDHTAGHTYLARTGLLGGDFPNHNDVYTQLNPGSTSLTGDQNTLKLSFESPVKGGVKVVKTYTFTRGSYVIGVDTKIDNVGTAPVTPTVYMELVRDNTAVETPMFSHTFLGPAVYTDAKHFQKIDFSDLDKNKANFEKSADNGWVAMVQHYFASAWIPQQGAKRDIYAEKIDPALYRVGVKQPVAAIAPGQSADVQARLFAGPEEERMLEGIAPGLELVKDYGWVTIIAKPLFWLLEKIHGYVGNWGWAIVLLTVLIKAVFFPLSAASYKSMARMKEITPRMQALRERFKSDPQKMNAALMELYKTEKVNPFGGCLPVVIQIPVFISLYWVLLASVEMRGAPWILWIHDLSQRDPFFILPVLMAVSMFVQTSLNPTPPDPVQAKMMKFMPIAFSVMFFFFPAGLVLYYVVNNVLSIAQQYYITRKLGGVKKKPA.

5 helical membrane passes run 7–24 (VLWV…DNWQ), 364–384 (WGWA…PLSA), 434–454 (LPVV…LASV), 473–493 (PFFI…SLNP), and 508–528 (PIAF…YYVV).

Belongs to the OXA1/ALB3/YidC family. Type 1 subfamily. In terms of assembly, interacts with the Sec translocase complex via SecD. Specifically interacts with transmembrane segments of nascent integral membrane proteins during membrane integration.

The protein resides in the cell inner membrane. Functionally, required for the insertion and/or proper folding and/or complex formation of integral membrane proteins into the membrane. Involved in integration of membrane proteins that insert both dependently and independently of the Sec translocase complex, as well as at least some lipoproteins. Aids folding of multispanning membrane proteins. This Burkholderia cenocepacia (strain ATCC BAA-245 / DSM 16553 / LMG 16656 / NCTC 13227 / J2315 / CF5610) (Burkholderia cepacia (strain J2315)) protein is Membrane protein insertase YidC.